Consider the following 363-residue polypeptide: Forkhead box protein I1 (363 aa).

The segment covering 1–18 (MNPVQQPAQQRSPASSLP) has biased composition (low complexity). Disordered regions lie at residues 1-24 (MNPV…KRAQ), 210-269 (DNGN…SPPA), and 344-363 (TTAQ…QGRY). Positions 125–219 (RPPYSYSALI…DNGNFRRKRK (95 aa)) form a DNA-binding region, fork-head. Residues 231–243 (KIGEDHLNPKGKE) show a composition bias toward basic and acidic residues. 2 stretches are compositionally biased toward low complexity: residues 244 to 258 (SPPM…EPSP) and 347 to 363 (QKQP…QGRY).

The protein localises to the nucleus. Its function is as follows. Transcription factor. Essential for ventral specification of the early cephalic (head) ectoderm during gastrulation, playing a role in the 'non-neural' versus 'neural' cell fate choice. Binds to DNA via the target sequence 5'-[AG]TAAA[CT]A-3', with 5'-ATAAACA-3' being the preferred binding site. In Xenopus tropicalis (Western clawed frog), this protein is Forkhead box protein I1.